Consider the following 929-residue polypeptide: Protocadherin gamma-B7 (929 aa).

The first 30 residues, 1–30 (MGGSCAQRRRAGPRQVLFPLLLPLFYPTLC), serve as a signal peptide directing secretion. 6 consecutive Cadherin domains span residues 31–133 (EPIR…APQF), 134–242 (RKDE…PPVF), 243–347 (SQDV…SPEI), 348–452 (IITS…APVF), 453–562 (GQSA…APRV), and 570–675 (DGSA…LPDF). Topologically, residues 31 to 691 (EPIRYSIPEE…SDSQAEMQFY (661 aa)) are extracellular. 2 N-linked (GlcNAc...) asparagine glycosylation sites follow: Asn-419 and Asn-545. The helical transmembrane segment at 692–712 (LVVALALISVLFLLAVILAIA) threads the bilayer. The Cytoplasmic portion of the chain corresponds to 713–929 (LRLRQSFSPT…KKKSGKKEKK (217 aa)). Disordered regions lie at residues 806 to 838 (QAPP…WPNN) and 899 to 929 (ATLT…KEKK). Over residues 807–838 (APPNTDWRFSQAQRPGTSGSQNGDDTGTWPNN) the composition is skewed to polar residues. Positions 919–929 (NKKKSGKKEKK) are enriched in basic residues.

The protein resides in the cell membrane. Its function is as follows. Potential calcium-dependent cell-adhesion protein. May be involved in the establishment and maintenance of specific neuronal connections in the brain. This chain is Protocadherin gamma-B7 (PCDHGB7), found in Homo sapiens (Human).